A 221-amino-acid chain; its full sequence is Adenylate kinase (221 aa).

Residue 10 to 15 participates in ATP binding; the sequence is GAGKGT. The tract at residues 30–59 is NMP; sequence STGDMLRAAVKAGTPLGLEAKRYMDAGELV. AMP contacts are provided by residues Thr-31, Arg-36, 57–59, 85–88, and Gln-92; these read ELV and GFPR. The interval 122 to 159 is LID; sequence GRRMHPASGRTYHVKFNPPKVEGVDDVTGEPLIQRDDD. ATP contacts are provided by residues Arg-123 and 132–133; that span reads TY. Arg-156 and Arg-167 together coordinate AMP. Gly-207 contributes to the ATP binding site.

It belongs to the adenylate kinase family. Monomer.

The protein resides in the cytoplasm. The catalysed reaction is AMP + ATP = 2 ADP. It participates in purine metabolism; AMP biosynthesis via salvage pathway; AMP from ADP: step 1/1. In terms of biological role, catalyzes the reversible transfer of the terminal phosphate group between ATP and AMP. Plays an important role in cellular energy homeostasis and in adenine nucleotide metabolism. The chain is Adenylate kinase from Paraburkholderia phymatum (strain DSM 17167 / CIP 108236 / LMG 21445 / STM815) (Burkholderia phymatum).